Consider the following 145-residue polypeptide: MLTAEEKAAVTGFWGKVNVDVVGAEALGRLLVVYPWTQRFFEHFGDLSSAGAVMGNPKVKAHGKRVLDAFSEGLKHLDDLKGAFAELSELHCNKLHVDPENFRLLGNVLVVVLARNFGGEFTPLVQADFQKVVAGVANALAHRYH.

Residues 1–145 form the Globin domain; it reads MLTAEEKAAV…VANALAHRYH (145 aa). Thr11 carries the phosphothreonine modification. N6-acetyllysine is present on Lys58. Position 62 (His62) interacts with heme b. N6-acetyllysine is present on Lys81. His91 contributes to the heme b binding site. S-nitrosocysteine is present on Cys92.

The protein belongs to the globin family. In terms of assembly, heterotetramer of two alpha chains and two beta chains. Red blood cells.

In terms of biological role, involved in oxygen transport from the lung to the various peripheral tissues. This is Hemoglobin subunit beta-3 (HBB) from Odocoileus virginianus virginianus (Virginia white-tailed deer).